The primary structure comprises 566 residues: Potassium-transporting ATPase potassium-binding subunit (566 aa).

12 helical membrane-spanning segments follow: residues 6–26, 60–80, 128–148, 167–187, 247–267, 276–296, 331–351, 361–381, 383–403, 423–443, 492–512, and 530–550; these read VALLTSYMLVLLLLAWPLGIA, AAAILVFNLLGAALLFLLMLF, LGLTVHNFLSAANGIAVAFVL, IWRITVYLLLPLSVIYALFLA, LTNFVQMVSILLIPAALCICF, VGSALLWTMGIMLSVAALLIM, FGLWASSLFATITTAASCGAV, LGGLIPMVLMQLGEVVFGGVG, GWYGMMLFVFLTVFLAGLMIG, IGLLIPPALVLLGTALAVILP, LMFVGRFGVMLPVLAIAGALI, and LFVGMLIGVVLLIGALTFIPA.

It belongs to the KdpA family. In terms of assembly, the system is composed of three essential subunits: KdpA, KdpB and KdpC.

It localises to the cell inner membrane. Part of the high-affinity ATP-driven potassium transport (or Kdp) system, which catalyzes the hydrolysis of ATP coupled with the electrogenic transport of potassium into the cytoplasm. This subunit binds the periplasmic potassium ions and delivers the ions to the membrane domain of KdpB through an intramembrane tunnel. This is Potassium-transporting ATPase potassium-binding subunit from Tolumonas auensis (strain DSM 9187 / NBRC 110442 / TA 4).